Reading from the N-terminus, the 220-residue chain is Cell division protein SepF (220 aa).

A disordered region spans residues 33-82 (GAARGYARRPREDRFEEEGYIDRAGREYDDRPAPREYDEPPIYRGGYDEP). Residues 52–70 (YIDRAGREYDDRPAPREYD) show a composition bias toward basic and acidic residues.

Belongs to the SepF family. In terms of assembly, homodimer. Interacts with FtsZ.

Its subcellular location is the cytoplasm. In terms of biological role, cell division protein that is part of the divisome complex and is recruited early to the Z-ring. Probably stimulates Z-ring formation, perhaps through the cross-linking of FtsZ protofilaments. Its function overlaps with FtsA. This Mycobacterium sp. (strain JLS) protein is Cell division protein SepF.